The primary structure comprises 577 residues: Aspartate--tRNA(Asp/Asn) ligase (577 aa).

Residue glutamate 171 participates in L-aspartate binding. The segment at 195–198 (QLFK) is aspartate. Arginine 217 provides a ligand contact to L-aspartate. Residues 217–219 (RDE) and glutamine 226 contribute to the ATP site. Residue histidine 444 coordinates L-aspartate. Residue glutamate 474 coordinates ATP. Position 481 (arginine 481) interacts with L-aspartate. 526 to 529 (GFDR) is an ATP binding site.

Belongs to the class-II aminoacyl-tRNA synthetase family. Type 1 subfamily. In terms of assembly, homodimer.

The protein resides in the cytoplasm. It carries out the reaction tRNA(Asx) + L-aspartate + ATP = L-aspartyl-tRNA(Asx) + AMP + diphosphate. Its function is as follows. Aspartyl-tRNA synthetase with relaxed tRNA specificity since it is able to aspartylate not only its cognate tRNA(Asp) but also tRNA(Asn). Reaction proceeds in two steps: L-aspartate is first activated by ATP to form Asp-AMP and then transferred to the acceptor end of tRNA(Asp/Asn). This chain is Aspartate--tRNA(Asp/Asn) ligase, found in Helicobacter pylori (strain Shi470).